The sequence spans 208 residues: Small ribosomal subunit protein uS2 (208 aa).

The segment at 189–208 is disordered; that stretch reads KPDQDLPVPPEEFETKLVQS.

This sequence belongs to the universal ribosomal protein uS2 family.

This chain is Small ribosomal subunit protein uS2 (rps2), found in Pyrobaculum aerophilum (strain ATCC 51768 / DSM 7523 / JCM 9630 / CIP 104966 / NBRC 100827 / IM2).